A 142-amino-acid chain; its full sequence is Large ribosomal subunit protein uL11 (142 aa).

It belongs to the universal ribosomal protein uL11 family. As to quaternary structure, part of the ribosomal stalk of the 50S ribosomal subunit. Interacts with L10 and the large rRNA to form the base of the stalk. L10 forms an elongated spine to which L12 dimers bind in a sequential fashion forming a multimeric L10(L12)X complex. One or more lysine residues are methylated.

Functionally, forms part of the ribosomal stalk which helps the ribosome interact with GTP-bound translation factors. In Hahella chejuensis (strain KCTC 2396), this protein is Large ribosomal subunit protein uL11.